The following is a 486-amino-acid chain: N-succinylglutamate 5-semialdehyde dehydrogenase (486 aa).

220 to 225 contacts NAD(+); the sequence is GSSRTG. Catalysis depends on residues Glu-243 and Cys-277.

This sequence belongs to the aldehyde dehydrogenase family. AstD subfamily.

The catalysed reaction is N-succinyl-L-glutamate 5-semialdehyde + NAD(+) + H2O = N-succinyl-L-glutamate + NADH + 2 H(+). Its pathway is amino-acid degradation; L-arginine degradation via AST pathway; L-glutamate and succinate from L-arginine: step 4/5. Functionally, catalyzes the NAD-dependent reduction of succinylglutamate semialdehyde into succinylglutamate. This chain is N-succinylglutamate 5-semialdehyde dehydrogenase, found in Shewanella baltica (strain OS185).